Reading from the N-terminus, the 88-residue chain is FXYD domain-containing ion transport regulator 4 (88 aa).

An N-terminal signal peptide occupies residues 1–20 (MEEITCAFLLLLAGLPALEA). Over 21 to 38 (SDPVDKDSPFYYDWESLQ) the chain is Extracellular. The helical transmembrane segment at 39–59 (LGGLIFGGLLCIAGIAMALSG) threads the bilayer. Residues 60–88 (KCKCRRTHKPSSLPGKATPLIIPGSANTC) lie on the Cytoplasmic side of the membrane.

Belongs to the FXYD family. As to quaternary structure, regulatory subunit of the sodium/potassium-transporting ATPase which is composed of a catalytic alpha subunit, a non-catalytic beta subunit and a regulatory subunit. The regulatory subunit, a member of the FXYD protein family, modulates the enzymatic activity in a tissue- and isoform-specific way by changing affinities of the Na+/K+-ATPase toward Na(+), K(+) or ATP.

The protein localises to the cell membrane. Its subcellular location is the basolateral cell membrane. Associates with and regulates the activity of the sodium/potassium-transporting ATPase (NKA) which catalyzes the hydrolysis of ATP coupled with the exchange of Na(+) and K(+) ions across the plasma membrane. Increases the apparent affinity of the transporter for Na(+) and increases NKA activity. This is FXYD domain-containing ion transport regulator 4 (Fxyd4) from Mus musculus (Mouse).